The sequence spans 579 residues: Effector protein HopAB3 (579 aa).

Disordered regions lie at residues 1-140 (MAGI…TGAV), 214-294 (VRQQ…NQVP), and 384-408 (PARAQAPRPAVPVAPATVSRRPDSA). Residues 1 to 336 (MAGINGAGPS…LRAALERHIL (336 aa)) form a host recognition; Pto interaction region. Composition is skewed to low complexity over residues 23-39 (ASGGAHGSSSGASSSNS), 89-101 (RPQESAEAAAPQA), 219-248 (ASAPPRTAARSSVRTPERSTVPPTSTESSS), 266-281 (NQRRPSSASNASASQR), and 384-402 (PARAQAPRPAVPVAPATVS). The segment at 337-579 (HRRPIPMDIA…IAKYAFRIVP (243 aa)) is E3 ubiquitin-protein ligase.

Belongs to the HopAB family. Interacts physically with plant cell Pto. In terms of processing, auto-ubiquitinated.

The protein localises to the secreted. In terms of biological role, effector protein involved in gene-for-gene resistance in tomato plants. It is recognized by the host Pto resistance protein and elicits Pto and Prf-dependent hypersensitive response (HR) and programmed cell death (PCD), resulting in host immunity. In susceptible plants, acts as a virulence factor by suppressing PCD and HR-based plant immunity. This function requires its E3 ubiquitin ligase activity probably by recruiting E2 enzymes and transferring ubiquitin molecules to cellular proteins involved in regulation of PCD and targeting them for degradation. Enhances the development of disease symptoms and bacterial growth. The protein is Effector protein HopAB3 (hopAB3) of Pseudomonas syringae pv. tomato.